The following is a 695-amino-acid chain: Phenoloxidase subunit 2 (695 aa).

3 residues coordinate Cu cation: His-215, His-219, and His-245. The active-site Proton acceptor is Glu-353. Cu cation is bound by residues His-368, His-372, and His-408. 2 disulfide bridges follow: Cys-586-Cys-630 and Cys-588-Cys-637.

As to quaternary structure, heterodimer. Forms a complex with an interleukin 1-like protein as a consequence of a host defense response. Cu(2+) serves as cofactor. In terms of processing, the N-terminus is blocked. As to expression, synthesized by oenocytoids, a type of hemocyte, and released into the hemolymph plasma.

The protein resides in the secreted. It carries out the reaction 2 L-dopa + O2 = 2 L-dopaquinone + 2 H2O. The enzyme catalyses L-tyrosine + O2 = L-dopaquinone + H2O. With respect to regulation, activated by immulectin and lipopolysaccharide. In terms of biological role, this is a copper-containing oxidase that functions in the formation of pigments such as melanins and other polyphenolic compounds. Catalyzes the rate-limiting conversions of tyrosine to DOPA, DOPA to DOPA-quinone and possibly 5,6 dihydroxyindole to indole-5'6 quinone. Binds to the surface of hemocytes and is involved in hemocyte melanization. The chain is Phenoloxidase subunit 2 from Manduca sexta (Tobacco hawkmoth).